The following is a 432-amino-acid chain: Adenylosuccinate synthetase (432 aa).

GTP contacts are provided by residues Gly13 to Lys19 and Gly41 to Thr43. Asp14 acts as the Proton acceptor in catalysis. Mg(2+)-binding residues include Asp14 and Gly41. IMP contacts are provided by residues Asp14–Lys17, Asn39–His42, Thr130, Arg144, Gln225, Thr240, and Arg304. Residue His42 is the Proton donor of the active site. Ala300–Arg306 provides a ligand contact to substrate. Residues Arg306, Lys332–Asp334, and Ser415–Gly417 each bind GTP.

It belongs to the adenylosuccinate synthetase family. Homodimer. The cofactor is Mg(2+).

It is found in the cytoplasm. The catalysed reaction is IMP + L-aspartate + GTP = N(6)-(1,2-dicarboxyethyl)-AMP + GDP + phosphate + 2 H(+). The protein operates within purine metabolism; AMP biosynthesis via de novo pathway; AMP from IMP: step 1/2. Functionally, plays an important role in the de novo pathway of purine nucleotide biosynthesis. Catalyzes the first committed step in the biosynthesis of AMP from IMP. This Edwardsiella ictaluri (strain 93-146) protein is Adenylosuccinate synthetase.